We begin with the raw amino-acid sequence, 454 residues long: Bifunctional protein GlmU (454 aa).

The interval 1–226 (MALNVVILAA…AIEVEGANNR (226 aa)) is pyrophosphorylase. UDP-N-acetyl-alpha-D-glucosamine is bound by residues 8-11 (LAAG), lysine 22, glutamine 73, 78-79 (GT), 100-102 (YGD), glycine 137, glutamate 151, asparagine 166, and asparagine 224. A Mg(2+)-binding site is contributed by aspartate 102. Asparagine 224 provides a ligand contact to Mg(2+). The linker stretch occupies residues 227-247 (VQLAQLERAYQARAAEKLMLE). Residues 248 to 454 (GANLRDPARI…GWPRPVKLKK (207 aa)) are N-acetyltransferase. Positions 330 and 348 each coordinate UDP-N-acetyl-alpha-D-glucosamine. Histidine 360 (proton acceptor) is an active-site residue. UDP-N-acetyl-alpha-D-glucosamine contacts are provided by tyrosine 363 and asparagine 374. Residues alanine 377, 383–384 (NY), serine 402, alanine 420, and arginine 437 contribute to the acetyl-CoA site.

In the N-terminal section; belongs to the N-acetylglucosamine-1-phosphate uridyltransferase family. It in the C-terminal section; belongs to the transferase hexapeptide repeat family. As to quaternary structure, homotrimer. Requires Mg(2+) as cofactor.

The protein localises to the cytoplasm. It carries out the reaction alpha-D-glucosamine 1-phosphate + acetyl-CoA = N-acetyl-alpha-D-glucosamine 1-phosphate + CoA + H(+). The enzyme catalyses N-acetyl-alpha-D-glucosamine 1-phosphate + UTP + H(+) = UDP-N-acetyl-alpha-D-glucosamine + diphosphate. The protein operates within nucleotide-sugar biosynthesis; UDP-N-acetyl-alpha-D-glucosamine biosynthesis; N-acetyl-alpha-D-glucosamine 1-phosphate from alpha-D-glucosamine 6-phosphate (route II): step 2/2. It participates in nucleotide-sugar biosynthesis; UDP-N-acetyl-alpha-D-glucosamine biosynthesis; UDP-N-acetyl-alpha-D-glucosamine from N-acetyl-alpha-D-glucosamine 1-phosphate: step 1/1. Its pathway is bacterial outer membrane biogenesis; LPS lipid A biosynthesis. Catalyzes the last two sequential reactions in the de novo biosynthetic pathway for UDP-N-acetylglucosamine (UDP-GlcNAc). The C-terminal domain catalyzes the transfer of acetyl group from acetyl coenzyme A to glucosamine-1-phosphate (GlcN-1-P) to produce N-acetylglucosamine-1-phosphate (GlcNAc-1-P), which is converted into UDP-GlcNAc by the transfer of uridine 5-monophosphate (from uridine 5-triphosphate), a reaction catalyzed by the N-terminal domain. The protein is Bifunctional protein GlmU of Shewanella woodyi (strain ATCC 51908 / MS32).